Reading from the N-terminus, the 105-residue chain is Replication restart protein PriB (105 aa).

An SSB domain is found at 1 to 102 (MTTNRLVLSG…LHAEQIEFID (102 aa)).

The protein belongs to the PriB family. In terms of assembly, homodimer. Interacts with PriA and DnaT. Component of the replication restart primosome. Primosome assembly occurs via a 'hand-off' mechanism. PriA binds to replication forks, subsequently PriB then DnaT bind; DnaT then displaces ssDNA to generate the helicase loading substrate.

Its function is as follows. Involved in the restart of stalled replication forks, which reloads the replicative helicase on sites other than the origin of replication; the PriA-PriB pathway is the major replication restart pathway. During primosome assembly it facilitates complex formation between PriA and DnaT on DNA; stabilizes PriA on DNA. Stimulates the DNA unwinding activity of PriA helicase. This chain is Replication restart protein PriB, found in Yersinia pseudotuberculosis serotype O:1b (strain IP 31758).